Consider the following 1024-residue polypeptide: MFYAELFCQSNFSFLTGASHPEELIVQANFLGYHSLAITDECSLAGIVRAHSAIKQHQLSVKQIVGSFFKLNTECQFVLLCPNREAYAELCRIITNARRRCEKGQYQLSQWDVMSLKHCLLIWLPTGQTSDEQWATWLSRYQQSRLWLGLQRHLHHDDEHYLHHCQTLANQFDLPITACGGVLMHRPERLPLQHTLTAIRHGCTVEQLGTQLLTNAEQSLRSEKKLRKLFKPQWLAESLYIASLCSFDLDSLRYEYPSELIPDGYTPDSYLEHLVEQGKKLRFPEGVPDAIEQTIQKELALIKEQKYPFFFLTIHDIVMFAKQQGILYQGRGSAANSVVCYCLQITSVDPRQIAVLFERFISKERDEPPDIDVDFEHERREEVIQYIYQKYGRQRAALAATVISYRFKSAVRQVGKALGIEETQLDFFLKNINRRDRQAGWQVQLVELGLRPDSLKGQHFIQLVEEIIGFPRHLSQHVGGFVISSGPLYELVPVENAAMPERTIIQWDKDDLESLKLLKVDVLSLGMLTAIRKCFRSIEQHHQQRLSIADITRRQDDQAVYKMIQKADTIGVFQIESRAQMSMLPRLKPACYYDLVIQIAIVRPGPIQGDMVHPFLKRRDGEEPISYPSVHVQEVLERTLGVPIFQEQVIKLAMVAAGFSGGEADQLRRAMAAWKKNGHVFKFKTKLINGMLERGYELDFAERIFEQICGFGEYGFPESHSASFAVLAYCSAWLKHYYPAEFYTALLNSQPMGFYSPSQLVQDAKRHGIAVLPICVNFSNPEHQLVRLTSGELAIRLGFNLIKGLSHEGITRLLTHRPAQGYQCISEVKQILRQAKDIQSLASANAFYQLADNRYLARWQVMDNLDELPLFQTLPSISNNPLPKPSDYQNVLEDYAATGLSLAEHPVAMLEKAGGLTRFTRANQLNQCSHRSLVTVIGLVTGKQSPGTAAGVTFFTLEDDTGNINVVVWQATSRAQKQAYLTARLLMVKGILEREGDVIHVIAGRLVDLTEKLSGLSPKSREFH.

It belongs to the DNA polymerase type-C family. DnaE2 subfamily.

The protein resides in the cytoplasm. It catalyses the reaction DNA(n) + a 2'-deoxyribonucleoside 5'-triphosphate = DNA(n+1) + diphosphate. In terms of biological role, DNA polymerase involved in damage-induced mutagenesis and translesion synthesis (TLS). It is not the major replicative DNA polymerase. This chain is Error-prone DNA polymerase, found in Vibrio vulnificus (strain YJ016).